Here is a 139-residue protein sequence, read N- to C-terminus: ATP synthase epsilon chain (139 aa).

It belongs to the ATPase epsilon chain family. In terms of assembly, F-type ATPases have 2 components, CF(1) - the catalytic core - and CF(0) - the membrane proton channel. CF(1) has five subunits: alpha(3), beta(3), gamma(1), delta(1), epsilon(1). CF(0) has three main subunits: a, b and c.

It localises to the cell membrane. In terms of biological role, produces ATP from ADP in the presence of a proton gradient across the membrane. The protein is ATP synthase epsilon chain of Ligilactobacillus salivarius (strain UCC118) (Lactobacillus salivarius).